The sequence spans 583 residues: MTRVEDFFSKQIDFCKRKKKIYLAIVASVLLVAAVIGVVAGVKSHSKNSDDHADIMAISSSAHAIVKSACSNTLHPELCYSAIVNVSDFSKKVTSQKDVIELSLNITVKAVRRNYYAVKELIKTRKGLTPREKVALHDCLETMDETLDELHTAVEDLELYPNKKSLKEHVEDLKTLISSAITNQETCLDGFSHDEADKKVRKVLLKGQKHVEKMCSNALAMICNMTDTDIANEMKLSAPANNRKLVEDNGEWPEWLSAGDRRLLQSSTVTPDVVVAADGSGDYKTVSEAVRKAPEKSSKRYVIRIKAGVYRENVDVPKKKTNIMFMGDGKSNTIITASRNVQDGSTTFHSATVVRVAGKVLARDITFQNTAGASKHQAVALCVGSDLSAFYRCDMLAYQDTLYVHSNRQFFVQCLVAGTVDFIFGNGAAVFQDCDIHARRPGSGQKNMVTAQGRTDPNQNTGIVIQKCRIGATSDLRPVQKSFPTYLGRPWKEYSRTVIMQSSITDVIQPAGWHEWNGNFALDTLFYGEYANTGAGAPTSGRVKWKGHKVITSSTEAQAYTPGRFIAGGSWLSSTGFPFSLGL.

The first 40 residues, 1-40 (MTRVEDFFSKQIDFCKRKKKIYLAIVASVLLVAAVIGVVA), serve as a signal peptide directing secretion. Positions 60–221 (SSAHAIVKSA…EKMCSNALAM (162 aa)) are pectinesterase inhibitor U1. 3 N-linked (GlcNAc...) asparagine glycosylation sites follow: Asn85, Asn105, and Asn224. A pectinesterase U1 region spans residues 272 to 570 (DVVVAADGSG…TPGRFIAGGS (299 aa)). 2 residues coordinate substrate: Thr347 and Gln377. Asp400 (proton donor; for pectinesterase activity) is an active-site residue. Cys414 and Cys434 are oxidised to a cystine. Asp421 (nucleophile; for pectinesterase activity) is an active-site residue. Residues Arg489 and Trp491 each coordinate substrate.

In the N-terminal section; belongs to the PMEI family. The protein in the C-terminal section; belongs to the pectinesterase family.

It is found in the secreted. It localises to the cell wall. The catalysed reaction is [(1-&gt;4)-alpha-D-galacturonosyl methyl ester](n) + n H2O = [(1-&gt;4)-alpha-D-galacturonosyl](n) + n methanol + n H(+). It participates in glycan metabolism; pectin degradation; 2-dehydro-3-deoxy-D-gluconate from pectin: step 1/5. Functionally, acts in the modification of cell walls via demethylesterification of cell wall pectin. This Solanum lycopersicum (Tomato) protein is Pectinesterase/pectinesterase inhibitor U1 (PMEU1).